A 110-amino-acid polypeptide reads, in one-letter code: MKYLAAYLLLTVGGKQSPSASDIESVLSTVGIEAEAERVESLISELNGKNIEELIAAGNEKLSTVPSAGAVATPAAGGAAGAEATSAAEEAKEEEAAEESDEDMGFGLFD.

The span at 73 to 88 (TPAAGGAAGAEATSAA) shows a compositional bias: low complexity. Residues 73–110 (TPAAGGAAGAEATSAAEEAKEEEAAEESDEDMGFGLFD) form a disordered region. Over residues 91–104 (AKEEEAAEESDEDM) the composition is skewed to acidic residues. S100 carries the phosphoserine modification.

It belongs to the eukaryotic ribosomal protein P1/P2 family. As to quaternary structure, component of the large ribosomal subunit (LSU). Mature yeast ribosomes consist of a small (40S) and a large (60S) subunit. The 40S small subunit contains 1 molecule of ribosomal RNA (18S rRNA) and at least 33 different proteins. The large 60S subunit contains 3 rRNA molecules (25S, 5.8S and 5S rRNA) and at least 46 different proteins. The acidic ribosomal P-proteins form the stalk structure of the 60S subunit. They are organized as a pentameric complex in which uL10/P0 interacts with 2 heterodimers of P1 and P2 proteins.

Its subcellular location is the cytoplasm. In terms of biological role, component of the ribosome, a large ribonucleoprotein complex responsible for the synthesis of proteins in the cell. The small ribosomal subunit (SSU) binds messenger RNAs (mRNAs) and translates the encoded message by selecting cognate aminoacyl-transfer RNA (tRNA) molecules. The large subunit (LSU) contains the ribosomal catalytic site termed the peptidyl transferase center (PTC), which catalyzes the formation of peptide bonds, thereby polymerizing the amino acids delivered by tRNAs into a polypeptide chain. The nascent polypeptides leave the ribosome through a tunnel in the LSU and interact with protein factors that function in enzymatic processing, targeting, and the membrane insertion of nascent chains at the exit of the ribosomal tunnel. This chain is Large ribosomal subunit protein P2B (rpp202), found in Schizosaccharomyces pombe (strain 972 / ATCC 24843) (Fission yeast).